The primary structure comprises 336 residues: 4-hydroxythreonine-4-phosphate dehydrogenase (336 aa).

Residues histidine 135 and threonine 136 each contribute to the substrate site. A divalent metal cation-binding residues include histidine 165, histidine 210, and histidine 265. Substrate-binding residues include lysine 273, asparagine 282, and arginine 291.

This sequence belongs to the PdxA family. Homodimer. It depends on Zn(2+) as a cofactor. Mg(2+) serves as cofactor. The cofactor is Co(2+).

Its subcellular location is the cytoplasm. The enzyme catalyses 4-(phosphooxy)-L-threonine + NAD(+) = 3-amino-2-oxopropyl phosphate + CO2 + NADH. It functions in the pathway cofactor biosynthesis; pyridoxine 5'-phosphate biosynthesis; pyridoxine 5'-phosphate from D-erythrose 4-phosphate: step 4/5. Its function is as follows. Catalyzes the NAD(P)-dependent oxidation of 4-(phosphooxy)-L-threonine (HTP) into 2-amino-3-oxo-4-(phosphooxy)butyric acid which spontaneously decarboxylates to form 3-amino-2-oxopropyl phosphate (AHAP). The chain is 4-hydroxythreonine-4-phosphate dehydrogenase from Marinobacter nauticus (strain ATCC 700491 / DSM 11845 / VT8) (Marinobacter aquaeolei).